The chain runs to 579 residues: Adenine deaminase (579 aa).

This sequence belongs to the metallo-dependent hydrolases superfamily. Adenine deaminase family. Mn(2+) serves as cofactor.

The enzyme catalyses adenine + H2O + H(+) = hypoxanthine + NH4(+). This is Adenine deaminase from Listeria welshimeri serovar 6b (strain ATCC 35897 / DSM 20650 / CCUG 15529 / CIP 8149 / NCTC 11857 / SLCC 5334 / V8).